Here is a 156-residue protein sequence, read N- to C-terminus: Cell division protein SepF (156 aa).

Residues 23–36 are compositionally biased toward basic and acidic residues; that stretch reads SYEKEQTDMKKQQD. The disordered stretch occupies residues 23–50; that stretch reads SYEKEQTDMKKQQDPPEQQDVTFPKAQP.

The protein belongs to the SepF family. In terms of assembly, homodimer. Interacts with FtsZ.

It localises to the cytoplasm. Functionally, cell division protein that is part of the divisome complex and is recruited early to the Z-ring. Probably stimulates Z-ring formation, perhaps through the cross-linking of FtsZ protofilaments. Its function overlaps with FtsA. The protein is Cell division protein SepF of Bacillus thuringiensis (strain Al Hakam).